A 117-amino-acid chain; its full sequence is Iron-sulfur cluster insertion protein ErpA (117 aa).

Residues C45, C109, and C111 each coordinate iron-sulfur cluster.

It belongs to the HesB/IscA family. As to quaternary structure, homodimer. Iron-sulfur cluster is required as a cofactor.

In terms of biological role, required for insertion of 4Fe-4S clusters for at least IspG. This chain is Iron-sulfur cluster insertion protein ErpA, found in Hahella chejuensis (strain KCTC 2396).